The following is a 79-amino-acid chain: Putative defensin-like protein 146 (79 aa).

The first 25 residues, methionine 1–glycine 25, serve as a signal peptide directing secretion. Cystine bridges form between cysteine 35–cysteine 78, cysteine 46–cysteine 66, cysteine 51–cysteine 72, and cysteine 55–cysteine 74.

It belongs to the DEFL family.

It is found in the secreted. This is Putative defensin-like protein 146 (LCR9) from Arabidopsis thaliana (Mouse-ear cress).